The sequence spans 376 residues: MDGEEQQPPHEANVEPVVPSEASEPVPRVLSGDPQNLSDVDAFNLLLEMKLKRRRQRPNLPRTVTQLVAEDGSRVYVVGTAHFSDDSKRDVVKTIREVQPDVVVVELCQYRVSMLKMDESTLLREAQELSLEKLQQAVRQNGLMSGLMQMLLLKVSAHITEQLGMAPGGEFREAFKEASKVPFCKFHLGDRPIPVTFKRAIAALSFWQKVRLAWGLCFLSDPISKDDVERCKQKDLLEQMMAEMIGEFPDLHRTIVSERDVYLTYMLRQAARRLELPRASDAEPRKCVPSVVVGVVGMGHVPGIEKNWSTDLNIQEIMTVPPPSVSGRVSRLAVKAAFFGLLGYSLYWMGRRTASLVLSLPAAQYCLQRVTEARHK.

An N-acetylmethionine modification is found at M1. Residues 1–34 (MDGEEQQPPHEANVEPVVPSEASEPVPRVLSGDP) form a disordered region. Low complexity predominate over residues 14–27 (VEPVVPSEASEPVP). Position 65 is a phosphothreonine (T65).

In Homo sapiens (Human), this protein is TraB domain-containing protein (TRABD).